The sequence spans 319 residues: ATP-dependent 6-phosphofructokinase (319 aa).

ATP contacts are provided by residues glycine 11, 72–73, and 102–105; these read RS and GDGS. Aspartate 103 provides a ligand contact to Mg(2+). 126–128 lines the substrate pocket; that stretch reads TID. Aspartate 128 functions as the Proton acceptor in the catalytic mechanism. Arginine 155 lines the ADP pocket. Residues arginine 163 and 170–172 each bind substrate; that span reads MGR. An ADP-binding site is contributed by 186–188; the sequence is GAE. Substrate contacts are provided by residues glutamate 223, arginine 245, and 251–254; that span reads HTQR.

It belongs to the phosphofructokinase type A (PFKA) family. ATP-dependent PFK group I subfamily. Prokaryotic clade 'B1' sub-subfamily. As to quaternary structure, homotetramer. Mg(2+) serves as cofactor.

The protein localises to the cytoplasm. The enzyme catalyses beta-D-fructose 6-phosphate + ATP = beta-D-fructose 1,6-bisphosphate + ADP + H(+). Its pathway is carbohydrate degradation; glycolysis; D-glyceraldehyde 3-phosphate and glycerone phosphate from D-glucose: step 3/4. Its activity is regulated as follows. Allosterically activated by ADP and other diphosphonucleosides, and allosterically inhibited by phosphoenolpyruvate. In terms of biological role, catalyzes the phosphorylation of D-fructose 6-phosphate to fructose 1,6-bisphosphate by ATP, the first committing step of glycolysis. The chain is ATP-dependent 6-phosphofructokinase from Sulfurimonas denitrificans (strain ATCC 33889 / DSM 1251) (Thiomicrospira denitrificans (strain ATCC 33889 / DSM 1251)).